Consider the following 161-residue polypeptide: RNA pyrophosphohydrolase (161 aa).

Positions 12-154 constitute a Nudix hydrolase domain; that stretch reads PYRPGVGMMI…KRKLYQAVVK (143 aa). Positions 46 to 67 match the Nudix box motif; it reads GGIVPGETPSIAAMREMLEEIG.

Belongs to the Nudix hydrolase family. RppH subfamily. Requires a divalent metal cation as cofactor.

Its function is as follows. Accelerates the degradation of transcripts by removing pyrophosphate from the 5'-end of triphosphorylated RNA, leading to a more labile monophosphorylated state that can stimulate subsequent ribonuclease cleavage. This Rickettsia rickettsii (strain Iowa) protein is RNA pyrophosphohydrolase.